Consider the following 339-residue polypeptide: Heme A synthase (339 aa).

8 consecutive transmembrane segments (helical) span residues 7–27, 92–112, 126–146, 159–179, 199–219, 254–274, 291–311, and 312–332; these read VIIW…VGGI, HRFI…YFLI, ILLG…KSGL, LHLT…LDLI, AIII…AGLI, VQFV…FLTF, ALLI…LYSV, and PLWL…TTTY. Histidine 258 provides a ligand contact to heme. A heme-binding site is contributed by histidine 319.

This sequence belongs to the COX15/CtaA family. Type 2 subfamily. As to quaternary structure, interacts with CtaB. Requires heme b as cofactor.

It localises to the cell membrane. The catalysed reaction is Fe(II)-heme o + 2 A + H2O = Fe(II)-heme a + 2 AH2. It functions in the pathway porphyrin-containing compound metabolism; heme A biosynthesis; heme A from heme O: step 1/1. Functionally, catalyzes the conversion of heme O to heme A by two successive hydroxylations of the methyl group at C8. The first hydroxylation forms heme I, the second hydroxylation results in an unstable dihydroxymethyl group, which spontaneously dehydrates, resulting in the formyl group of heme A. This Flavobacterium psychrophilum (strain ATCC 49511 / DSM 21280 / CIP 103535 / JIP02/86) protein is Heme A synthase.